Consider the following 806-residue polypeptide: LisH domain-containing protein ARMC9 (806 aa).

Residues 7-39 (YEADLLGLVKEFLNFGEFQETLECFSKECKIKG) enclose the LisH domain. Positions 194–230 (KLITLYKESLHNNQEQLQQLQQQLMETEHKARTYKKC) form a coiled coil. Disordered stretches follow at residues 576–604 (FDES…DLDK), 650–736 (PLQR…SPRI), and 748–806 (NSSK…SYRK). Residues 579 to 604 (SVESDDEEEEKDDEEDEDALEADLDK) are compositionally biased toward acidic residues. Residues 655–688 (VTPSSHRAMNTVRKNSNSPSPLTNTFKSSQANKM) show a composition bias toward polar residues. Positions 689–708 (SLSSSRPPTRSGSRASSSDS) are enriched in low complexity. The span at 759–782 (EVQNATSRKTRTPTIAPQFSQSGP) shows a compositional bias: polar residues. The span at 783-806 (QQTSYSSSAGSSTRSRQSTQSYRK) shows a compositional bias: low complexity.

The protein resides in the cytoplasm. The protein localises to the cytoskeleton. It is found in the cilium basal body. It localises to the cell projection. Its subcellular location is the cilium. The protein resides in the microtubule organizing center. The protein localises to the centrosome. It is found in the centriole. Functionally, involved in ciliogenesis. It is required for appropriate acetylation and polyglutamylation of ciliary microtubules, and regulation of cilium length. Acts as a positive regulator of hedgehog (Hh)signaling. The sequence is that of LisH domain-containing protein ARMC9 (armc9) from Xenopus laevis (African clawed frog).